Reading from the N-terminus, the 226-residue chain is Ribonuclease HII (226 aa).

In terms of domain architecture, RNase H type-2 spans 24-216 (QRLCGVDEAG…VRKVLERGMV (193 aa)). A divalent metal cation contacts are provided by D30, E31, and D125.

This sequence belongs to the RNase HII family. The cofactor is Mn(2+). Requires Mg(2+) as cofactor.

The protein localises to the cytoplasm. The enzyme catalyses Endonucleolytic cleavage to 5'-phosphomonoester.. Functionally, endonuclease that specifically degrades the RNA of RNA-DNA hybrids. The sequence is that of Ribonuclease HII from Cupriavidus metallidurans (strain ATCC 43123 / DSM 2839 / NBRC 102507 / CH34) (Ralstonia metallidurans).